A 421-amino-acid chain; its full sequence is Gamma-glutamyl phosphate reductase (421 aa).

Belongs to the gamma-glutamyl phosphate reductase family.

It localises to the cytoplasm. It catalyses the reaction L-glutamate 5-semialdehyde + phosphate + NADP(+) = L-glutamyl 5-phosphate + NADPH + H(+). The protein operates within amino-acid biosynthesis; L-proline biosynthesis; L-glutamate 5-semialdehyde from L-glutamate: step 2/2. Its function is as follows. Catalyzes the NADPH-dependent reduction of L-glutamate 5-phosphate into L-glutamate 5-semialdehyde and phosphate. The product spontaneously undergoes cyclization to form 1-pyrroline-5-carboxylate. This is Gamma-glutamyl phosphate reductase from Acinetobacter baumannii (strain ATCC 17978 / DSM 105126 / CIP 53.77 / LMG 1025 / NCDC KC755 / 5377).